The primary structure comprises 1877 residues: Transmembrane protein 131 (1877 aa).

An N-terminal signal peptide occupies residues 1–20 (MGKRAGGAAAAAAAASTSSA). The Lumenal segment spans residues 21–1115 (AGLEPAAGRG…AEALPRPNWE (1095 aa)). Positions 107-281 (RFEPPMLDFH…ETKGVMRASF (175 aa)) are papD-L domain. A helical transmembrane segment spans residues 1116–1136 (LALYIIISGVMSALFLLVIGT). Residues 1137–1877 (AYLEAQGIWE…WSNSHFPHEN (741 aa)) lie on the Cytoplasmic side of the membrane. Positions 1197–1227 (NASSRPGTGSHRQCGTSVHPHSSHGSKNSAD) are enriched in polar residues. 4 disordered regions span residues 1197 to 1573 (NASS…SSST), 1590 to 1655 (LKQR…NPTF), 1679 to 1707 (SDFS…SPVS), and 1830 to 1852 (NSAA…TYNP). Residues 1233–1258 (TRNSSSMSSRTSPQAAASQSTSKTSP) are compositionally biased toward low complexity. Over residues 1301-1311 (QPPPPVPQHQE) the composition is skewed to pro residues. Residues S1318 and S1338 each carry the phosphoserine modification. 2 stretches are compositionally biased toward basic and acidic residues: residues 1326–1339 (SHPE…HSSE) and 1349–1360 (AMDKDFDHHDSS). S1371 carries the post-translational modification Phosphoserine. Positions 1376-1391 (SKGKGKSLQQRKAKPP) are enriched in basic residues. The segment covering 1392 to 1414 (KKQEEKEKRGKGKPQEDELKDAL) has biased composition (basic and acidic residues). Residues 1420 to 1432 (SSTTTETSNPDTE) are compositionally biased toward low complexity. Composition is skewed to polar residues over residues 1507-1523 (TLAS…TKGT) and 1538-1550 (LPSS…TSSS). Residues 1599 to 1608 (PASPSLPTAP) are compositionally biased toward pro residues. The segment covering 1609–1646 (CPFTSRGSYSSVVNSSGSDTKAKQTSSSKSKLTKAASL) has biased composition (low complexity). The span at 1830–1839 (NSAAAHTPSA) shows a compositional bias: polar residues. Phosphoserine occurs at positions 1857 and 1865.

Belongs to the TMEM131 family. As to quaternary structure, interacts (via PapD-L domain) with COL1A2 (via C-terminus); the interaction is direct, may occur with other collagen proteins, and is involved in assembly and TRAPPIII ER-to-Golgi transport complex-dependent secretion of collagen. Interacts (via C-terminus) with TRAPPC8 (via C-terminus); the interaction is direct.

The protein resides in the membrane. Functionally, collagen binding transmembrane protein involved in collagen secretion by recruiting the ER-to-Golgi transport complex TRAPPIII. May play a role in the immune response to viral infection. The polypeptide is Transmembrane protein 131 (Mus musculus (Mouse)).